Reading from the N-terminus, the 104-residue chain is V-type ATP synthase subunit F (104 aa).

The protein belongs to the V-ATPase F subunit family.

Produces ATP from ADP in the presence of a proton gradient across the membrane. The polypeptide is V-type ATP synthase subunit F (Thermus thermophilus (strain ATCC BAA-163 / DSM 7039 / HB27)).